We begin with the raw amino-acid sequence, 332 residues long: Arabinogalactan endo-beta-1,4-galactanase (332 aa).

The N-linked (GlcNAc...) asparagine glycan is linked to N111. E135 acts as the Proton donor in catalysis. E245 acts as the Nucleophile in catalysis.

This sequence belongs to the glycosyl hydrolase 53 family.

The enzyme catalyses The enzyme specifically hydrolyzes (1-&gt;4)-beta-D-galactosidic linkages in type I arabinogalactans.. In Thermothelomyces thermophilus (Myceliophthora thermophila), this protein is Arabinogalactan endo-beta-1,4-galactanase.